Consider the following 197-residue polypeptide: Small ribosomal subunit protein uS4 (197 aa).

An S4 RNA-binding domain is found at 87 to 147; that stretch reads SRIDNVIFRL…ESKKNTQRMK (61 aa).

The protein belongs to the universal ribosomal protein uS4 family. As to quaternary structure, part of the 30S ribosomal subunit. Contacts protein S5. The interaction surface between S4 and S5 is involved in control of translational fidelity.

In terms of biological role, one of the primary rRNA binding proteins, it binds directly to 16S rRNA where it nucleates assembly of the body of the 30S subunit. Its function is as follows. With S5 and S12 plays an important role in translational accuracy. The protein is Small ribosomal subunit protein uS4 of Agathobacter rectalis (strain ATCC 33656 / DSM 3377 / JCM 17463 / KCTC 5835 / VPI 0990) (Eubacterium rectale).